The sequence spans 487 residues: MLTLQIFEAFAIILCVYFLWSRRRFYIMMLKLPGPMGFPFIGLAFEYIRLKRKIRLRTILFKIYGKTVLTWIGLTPVLVTCEPKILEDIFTSPNCSNRSSVVDKAISSCLGLGLLTLKNNHWNERRKLLLPSFKNNAVLSFVPVLNNEANFLVTLLAEFVDGGDINLLPELNKWSFKIAAQITMGDEVRNQANYQNGNLLESYKALNNLIPIGVVMPWLRNKYLGKLFSYEKRRLEAATQSNAFIKDIIDKKLSSTDNSSEPALIDRILNLVRIGELSYDDVMGEFSNIIFAASDTLSITVNNVLILMAMFPKYQDNVFEELAEVFPSGGEFEASHADLEKLVKLDRVLHETMRLIPAVPLLIRQTSHSIQLSNGFYIPEGVTLMIDIFHTHRNKDIWGPQANAFNPDNFLPENKRARPPYSYLPFSKGKKTCLGWKLSLISAKLALAKILRNYMLSTTFLYKDLRFIDNTTMKLAEQPLLAVKRRI.

Tyr-223 is subject to Phosphotyrosine. Cys-433 is a binding site for heme.

It belongs to the cytochrome P450 family. It depends on heme as a cofactor.

The protein localises to the endoplasmic reticulum membrane. Its subcellular location is the microsome membrane. Its function is as follows. May be involved in the metabolism of insect hormones and in the breakdown of synthetic insecticides. This is Probable cytochrome P450 313a5 (Cyp313a5) from Drosophila melanogaster (Fruit fly).